The sequence spans 389 residues: Lipid-A-disaccharide synthase (389 aa).

This sequence belongs to the LpxB family.

It catalyses the reaction a lipid X + a UDP-2-N,3-O-bis[(3R)-3-hydroxyacyl]-alpha-D-glucosamine = a lipid A disaccharide + UDP + H(+). The protein operates within bacterial outer membrane biogenesis; LPS lipid A biosynthesis. Functionally, condensation of UDP-2,3-diacylglucosamine and 2,3-diacylglucosamine-1-phosphate to form lipid A disaccharide, a precursor of lipid A, a phosphorylated glycolipid that anchors the lipopolysaccharide to the outer membrane of the cell. This chain is Lipid-A-disaccharide synthase, found in Verminephrobacter eiseniae (strain EF01-2).